The chain runs to 145 residues: Large ribosomal subunit protein uL11 (145 aa).

The protein belongs to the universal ribosomal protein uL11 family. Part of the ribosomal stalk of the 50S ribosomal subunit. Interacts with L10 and the large rRNA to form the base of the stalk. L10 forms an elongated spine to which L12 dimers bind in a sequential fashion forming a multimeric L10(L12)X complex. One or more lysine residues are methylated.

Functionally, forms part of the ribosomal stalk which helps the ribosome interact with GTP-bound translation factors. The chain is Large ribosomal subunit protein uL11 from Persephonella marina (strain DSM 14350 / EX-H1).